Reading from the N-terminus, the 152-residue chain is Small ribosomal subunit protein uS13z/uS13y/uS13x (152 aa).

At serine 2 the chain carries N-acetylserine.

This sequence belongs to the universal ribosomal protein uS13 family.

The protein localises to the cytoplasm. Its function is as follows. Located at the top of the head of the 40S subunit, it contacts several helices of the 18S rRNA. The polypeptide is Small ribosomal subunit protein uS13z/uS13y/uS13x (RPS18A) (Arabidopsis thaliana (Mouse-ear cress)).